The sequence spans 245 residues: Phycocyanobilin:ferredoxin oxidoreductase (245 aa).

It belongs to the HY2 family.

The enzyme catalyses (2R,3Z)-phycocyanobilin + 4 oxidized [2Fe-2S]-[ferredoxin] = biliverdin IXalpha + 4 reduced [2Fe-2S]-[ferredoxin] + 4 H(+). Functionally, catalyzes the four-electron reduction of biliverdin IX-alpha (2-electron reduction at both the A and D rings); the reaction proceeds via an isolatable 2-electron intermediate, 181,182-dihydrobiliverdin. The chain is Phycocyanobilin:ferredoxin oxidoreductase from Trichodesmium erythraeum (strain IMS101).